Here is a 477-residue protein sequence, read N- to C-terminus: 3-sulfolactaldehyde dehydrogenase (477 aa).

Gly-232–Ser-233 is a binding site for NAD(+). Catalysis depends on Glu-252, which acts as the Proton acceptor. Leu-253 contributes to the NAD(+) binding site. Cys-286 serves as the catalytic Nucleophile. Glu-380 contacts NAD(+).

The protein belongs to the aldehyde dehydrogenase family.

It catalyses the reaction (2S)-3-sulfolactaldehyde + NAD(+) + H2O = (2S)-3-sulfolactate + NADH + 2 H(+). Its function is as follows. Part of the sulfo-TAL (or sulfo-SFT) pathway, a D-sulfoquinovose degradation pathway that produces sulfolactate (SL). Catalyzes the oxidation of 3-sulfolactaldehyde (SLA) to sulfolactate (SL). The chain is 3-sulfolactaldehyde dehydrogenase from Priestia aryabhattai (Bacillus aryabhattai).